Reading from the N-terminus, the 290-residue chain is Short neuropeptide F (290 aa).

An N-terminal signal peptide occupies residues 1–32 (MFRFNPQLSHGCALALICCLLNLLMMHQPTNA). A propeptide spanning residues 33–87 (ELSPVVQGEFFLPILPDDHPPNTDTSFGGPISNLYDNLLQREYAGPVVFPNHQVE) is cleaved from the precursor. Phenylalanine 100 and phenylalanine 134 each carry phenylalanine amide. A propeptide spanning residues 138–290 (DPTLPQMRRT…IETSSIAPKN (153 aa)) is cleaved from the precursor. The tract at residues 238-290 (VAGYANDGDDTEAQLDEDTSEFQREARKPMRLRWGRSTGKAPQIETSSIAPKN) is disordered. Residues 244–257 (DGDDTEAQLDEDTS) are compositionally biased toward acidic residues. Residues 281–290 (IETSSIAPKN) are compositionally biased toward polar residues.

It belongs to the NPY family.

The protein resides in the secreted. Its function is as follows. Plays a role in controlling food intake and regulating body size. The polypeptide is Short neuropeptide F (Drosophila pseudoobscura pseudoobscura (Fruit fly)).